Consider the following 797-residue polypeptide: Probable exo-1,4-beta-xylosidase xlnD (797 aa).

The N-terminal stretch at 1–20 is a signal peptide; the sequence is MPGAASIVAVLAALLPTALG. N-linked (GlcNAc...) asparagine glycans are attached at residues asparagine 23, asparagine 87, asparagine 142, and asparagine 237. Aspartate 310 is an active-site residue. N-linked (GlcNAc...) asparagine glycosylation is found at asparagine 326, asparagine 391, asparagine 404, asparagine 442, asparagine 479, asparagine 521, asparagine 617, asparagine 644, asparagine 657, asparagine 684, and asparagine 706.

Belongs to the glycosyl hydrolase 3 family.

It localises to the secreted. The catalysed reaction is Hydrolysis of (1-&gt;4)-beta-D-xylans, to remove successive D-xylose residues from the non-reducing termini.. It participates in glycan degradation; xylan degradation. Its function is as follows. Xylan 1,4-beta-xylosidase involved in the hydrolysis of xylan, a major structural heterogeneous polysaccharide found in plant biomass representing the second most abundant polysaccharide in the biosphere, after cellulose. The sequence is that of Probable exo-1,4-beta-xylosidase xlnD (xlnD) from Aspergillus flavus (strain ATCC 200026 / FGSC A1120 / IAM 13836 / NRRL 3357 / JCM 12722 / SRRC 167).